We begin with the raw amino-acid sequence, 381 residues long: Curved DNA-binding protein (381 aa).

At serine 8 the chain carries Phosphoserine. Residue threonine 362 is modified to Phosphothreonine. A Nuclear localization signal motif is present at residues 368–375 (KNKKKSKK).

The protein belongs to the peptidase M24 family.

The protein localises to the nucleus. A non-essential protein that preferentially binds curved DNA. Binds non-curved DNA with a much lower affinity. The polypeptide is Curved DNA-binding protein (cdb4) (Schizosaccharomyces pombe (strain 972 / ATCC 24843) (Fission yeast)).